The following is a 148-amino-acid chain: Large ribosomal subunit protein uL15 (148 aa).

A disordered region spans residues 1–57 (MRLHDLYPFPEERKTRKRVGRGSGSGLGCTSGKGNKGQNARAGGGVRPGFEGGQMPL). 2 stretches are compositionally biased toward gly residues: residues 21–35 (RGSG…GKGN) and 42–52 (AGGGVRPGFEG).

This sequence belongs to the universal ribosomal protein uL15 family. In terms of assembly, part of the 50S ribosomal subunit.

Its function is as follows. Binds to the 23S rRNA. This chain is Large ribosomal subunit protein uL15, found in Nitratidesulfovibrio vulgaris (strain ATCC 29579 / DSM 644 / CCUG 34227 / NCIMB 8303 / VKM B-1760 / Hildenborough) (Desulfovibrio vulgaris).